Consider the following 1178-residue polypeptide: DNA-directed RNA polymerase subunit beta' (1178 aa).

4 residues coordinate Zn(2+): Cys60, Cys62, Cys75, and Cys78. Asp450, Asp452, and Asp454 together coordinate Mg(2+). Zn(2+)-binding residues include Cys795, Cys869, Cys876, and Cys879.

This sequence belongs to the RNA polymerase beta' chain family. The RNAP catalytic core consists of 2 alpha, 1 beta, 1 beta' and 1 omega subunit. When a sigma factor is associated with the core the holoenzyme is formed, which can initiate transcription. Requires Mg(2+) as cofactor. Zn(2+) is required as a cofactor.

It carries out the reaction RNA(n) + a ribonucleoside 5'-triphosphate = RNA(n+1) + diphosphate. DNA-dependent RNA polymerase catalyzes the transcription of DNA into RNA using the four ribonucleoside triphosphates as substrates. This is DNA-directed RNA polymerase subunit beta' from Clostridium botulinum (strain ATCC 19397 / Type A).